The following is a 232-amino-acid chain: Large ribosomal subunit protein uL1 (232 aa).

The protein belongs to the universal ribosomal protein uL1 family. As to quaternary structure, part of the 50S ribosomal subunit.

Functionally, binds directly to 23S rRNA. The L1 stalk is quite mobile in the ribosome, and is involved in E site tRNA release. Protein L1 is also a translational repressor protein, it controls the translation of the L11 operon by binding to its mRNA. The polypeptide is Large ribosomal subunit protein uL1 (Methylorubrum extorquens (strain CM4 / NCIMB 13688) (Methylobacterium extorquens)).